The chain runs to 1060 residues: Beta-galactosidase (1060 aa).

The substrate site is built by Asn-110 and Asp-209. Asp-209 serves as a coordination point for Na(+). 3 residues coordinate Mg(2+): Glu-432, His-434, and Glu-477. Residues Glu-477 and 553–556 (EYAH) contribute to the substrate site. Glu-477 acts as the Proton donor in catalysis. Glu-553 acts as the Nucleophile in catalysis. Asn-613 is a binding site for Mg(2+). The Na(+) site is built by Phe-617 and Asn-620. Asn-620 and Trp-1035 together coordinate substrate.

This sequence belongs to the glycosyl hydrolase 2 family. Homotetramer. The cofactor is Mg(2+). It depends on Na(+) as a cofactor.

The catalysed reaction is Hydrolysis of terminal non-reducing beta-D-galactose residues in beta-D-galactosides.. This Yersinia pestis bv. Antiqua (strain Antiqua) protein is Beta-galactosidase.